Reading from the N-terminus, the 389-residue chain is Protein CysO (389 aa).

An N6-(pyridoxal phosphate)lysine modification is found at K127. Pyridoxal 5'-phosphate-binding positions include N155, 261-265, and S341; that span reads GTSGH.

The protein belongs to the cysteine synthase/cystathionine beta-synthase family. As to quaternary structure, homodimer. Requires pyridoxal 5'-phosphate as cofactor.

The catalysed reaction is O-acetyl-L-serine + hydrogen sulfide = L-cysteine + acetate. The enzyme catalyses O-phospho-L-serine + hydrogen sulfide + H(+) = L-cysteine + phosphate. It carries out the reaction L-homocysteine + L-serine = L,L-cystathionine + H2O. It functions in the pathway amino-acid biosynthesis; L-cysteine biosynthesis; L-cysteine from L-serine: step 2/2. Its function is as follows. Cysteine synthase that can also catalyze the synthesis of S-sulfo-L-cysteine from thiosulfate and O(3)-acetyl-L-serine, as well as the sulfhydrylation of L-serine by sulfide. This chain is Protein CysO (cysO), found in Aeropyrum pernix (strain ATCC 700893 / DSM 11879 / JCM 9820 / NBRC 100138 / K1).